A 340-amino-acid chain; its full sequence is Ketol-acid reductoisomerase (NADP(+)) (340 aa).

Residues 3–183 form the KARI N-terminal Rossmann domain; that stretch reads VNIYYDKDCD…GGGRTGIIET (181 aa). NADP(+) contacts are provided by residues 26–29, Ser54, and 84–87; these read FGSQ and DELQ. His109 is an active-site residue. Position 135 (Gly135) interacts with NADP(+). One can recognise a KARI C-terminal knotted domain in the interval 184–329; it reads TFKDETETDL…KKLRAMMPWI (146 aa). Mg(2+)-binding residues include Asp192, Glu196, Glu228, and Glu232. Ser253 provides a ligand contact to substrate.

Belongs to the ketol-acid reductoisomerase family. Requires Mg(2+) as cofactor.

The catalysed reaction is (2R)-2,3-dihydroxy-3-methylbutanoate + NADP(+) = (2S)-2-acetolactate + NADPH + H(+). It catalyses the reaction (2R,3R)-2,3-dihydroxy-3-methylpentanoate + NADP(+) = (S)-2-ethyl-2-hydroxy-3-oxobutanoate + NADPH + H(+). The protein operates within amino-acid biosynthesis; L-isoleucine biosynthesis; L-isoleucine from 2-oxobutanoate: step 2/4. It functions in the pathway amino-acid biosynthesis; L-valine biosynthesis; L-valine from pyruvate: step 2/4. Involved in the biosynthesis of branched-chain amino acids (BCAA). Catalyzes an alkyl-migration followed by a ketol-acid reduction of (S)-2-acetolactate (S2AL) to yield (R)-2,3-dihydroxy-isovalerate. In the isomerase reaction, S2AL is rearranged via a Mg-dependent methyl migration to produce 3-hydroxy-3-methyl-2-ketobutyrate (HMKB). In the reductase reaction, this 2-ketoacid undergoes a metal-dependent reduction by NADPH to yield (R)-2,3-dihydroxy-isovalerate. The protein is Ketol-acid reductoisomerase (NADP(+)) of Campylobacter curvus (strain 525.92).